Consider the following 170-residue polypeptide: MQKNAYTFEELLACGRGEMFGPGNAQLPAPPMLMFDRIVRIEAEGGKYGKGYVEAEFDIRPDLWFFDCHFIGDPVMPGCLGLDAMWQLVGFFLGWSGGPGRGRALGVGEVKFTGQVTPDIKKVVYKIDLKRVIMRKLVMGIADGVLEADGKVIYETSDLKVGLFTPEQMA.

His-69 is a catalytic residue.

This sequence belongs to the thioester dehydratase family. FabA subfamily. Homodimer.

The protein localises to the cytoplasm. The enzyme catalyses a (3R)-hydroxyacyl-[ACP] = a (2E)-enoyl-[ACP] + H2O. The catalysed reaction is (3R)-hydroxydecanoyl-[ACP] = (2E)-decenoyl-[ACP] + H2O. It carries out the reaction (2E)-decenoyl-[ACP] = (3Z)-decenoyl-[ACP]. The protein operates within lipid metabolism; fatty acid biosynthesis. Functionally, necessary for the introduction of cis unsaturation into fatty acids. Catalyzes the dehydration of (3R)-3-hydroxydecanoyl-ACP to E-(2)-decenoyl-ACP and then its isomerization to Z-(3)-decenoyl-ACP. Can catalyze the dehydratase reaction for beta-hydroxyacyl-ACPs with saturated chain lengths up to 16:0, being most active on intermediate chain length. This chain is 3-hydroxydecanoyl-[acyl-carrier-protein] dehydratase, found in Caulobacter vibrioides (strain ATCC 19089 / CIP 103742 / CB 15) (Caulobacter crescentus).